The sequence spans 554 residues: NADH-ubiquinone oxidoreductase chain 5 (554 aa).

15 consecutive transmembrane segments (helical) span residues 6-26 (VCGILLFEFSFLMMLMSLYLL), 57-77 (LMFIFLVSMIFSMIIIYSISY), 93-113 (ILFLISMYMLILSPNMLSIIL), 150-170 (IGLLLIMGLMTYYGSWNLSFY), 175-197 (FMMIYILLMAFTKSAQIPFSTWL), 209-228 (SLVHSSTLVTAGIYLLIRYV), 238-258 (YIMLIASLTMLFAGLVANFEL), 263-283 (VVAYSTLSQLGFMMSMLSIGS), 286-306 (LVFLHLFIHAMFKSLMFMCVG), 332-352 (SMILIFSILSLCGFPFLVGYY), 379-399 (IFTVSYSFRMILVLTSKFLMM), 409-429 (IMCISMMMMMIFSLIYSKLIF), 441-461 (LLMIYKLMVFKMIMVGLIMGF), 480-500 (FLFMNLIYKIIYKKIIMMMFT), and 532-552 (LMINIYLTILIYLIYLLIYLI).

Belongs to the complex I subunit 5 family.

It localises to the mitochondrion inner membrane. The catalysed reaction is a ubiquinone + NADH + 5 H(+)(in) = a ubiquinol + NAD(+) + 4 H(+)(out). Functionally, core subunit of the mitochondrial membrane respiratory chain NADH dehydrogenase (Complex I) that is believed to belong to the minimal assembly required for catalysis. Complex I functions in the transfer of electrons from NADH to the respiratory chain. The immediate electron acceptor for the enzyme is believed to be ubiquinone. The protein is NADH-ubiquinone oxidoreductase chain 5 (ND5) of Apis mellifera ligustica (Common honeybee).